The primary structure comprises 326 residues: Transmembrane protein PVRIG (326 aa).

The next 3 helical transmembrane spans lie at 26 to 46, 62 to 78, and 172 to 192; these read LVLP…EVWV, CGFL…VSWG, and LAGI…LLHL. Tyr233 is subject to Phosphotyrosine. Positions 296–326 are disordered; it reads AGERPPHTGPGLTLFPDPRGPRAMEGPLGVR.

Interacts with NECTIN2, hence competing with CD226. As to expression, expressed in some types of immune cells. Expressed at low levels on the surface of freshly isolated T-cells and natural killer (NK) cells, predominantly on CD8+ T-cells (mainly memory/effector, but not naive cells) and on both CD16+ and CD16- NK cells. T-cell expression levels are variable among individuals. Not detected in B-cells, naive or helper T-cells, monocytes, nor neutrophils (at protein level). Not detected in dendritic cells.

It is found in the cell membrane. Cell surface receptor for NECTIN2. May act as a coinhibitory receptor that suppresses T-cell receptor-mediated signals. Following interaction with NECTIN2, inhibits T-cell proliferation. Competes with CD226 for NECTIN2-binding. The chain is Transmembrane protein PVRIG (PVRIG) from Homo sapiens (Human).